The primary structure comprises 146 residues: Catabolic 3-dehydroquinase (146 aa).

The active-site Proton acceptor is the tyrosine 24. The substrate site is built by asparagine 78, histidine 84, and aspartate 91. Histidine 104 acts as the Proton donor in catalysis. Residues 105-106 (IT) and arginine 115 each bind substrate.

This sequence belongs to the type-II 3-dehydroquinase family. In terms of assembly, homododecamer. Adopts a ring-like structure, composed of an arrangement of two hexameric rings stacked on top of one another.

It catalyses the reaction 3-dehydroquinate = 3-dehydroshikimate + H2O. The protein operates within aromatic compound metabolism; 3,4-dihydroxybenzoate biosynthesis; 3,4-dihydroxybenzoate from 3-dehydroquinate: step 1/2. Is involved in the catabolism of quinate. Allows the utilization of quinate as carbon source via the beta-ketoadipate pathway. In Scheffersomyces stipitis (strain ATCC 58785 / CBS 6054 / NBRC 10063 / NRRL Y-11545) (Yeast), this protein is Catabolic 3-dehydroquinase.